Here is a 124-residue protein sequence, read N- to C-terminus: Acidic phospholipase A2 (124 aa).

7 cysteine pairs are disulfide-bonded: cysteine 26/cysteine 116, cysteine 28/cysteine 44, cysteine 43/cysteine 95, cysteine 49/cysteine 124, cysteine 50/cysteine 88, cysteine 57/cysteine 81, and cysteine 75/cysteine 86. Positions 27, 29, and 31 each coordinate Ca(2+). The active site involves histidine 47. Aspartate 48 is a binding site for Ca(2+). Residue aspartate 89 is part of the active site.

This sequence belongs to the phospholipase A2 family. Group II subfamily. D49 sub-subfamily. As to quaternary structure, monomer. Ca(2+) serves as cofactor. In terms of tissue distribution, expressed by the venom gland.

Its subcellular location is the secreted. It catalyses the reaction a 1,2-diacyl-sn-glycero-3-phosphocholine + H2O = a 1-acyl-sn-glycero-3-phosphocholine + a fatty acid + H(+). Snake venom phospholipase A2 (PLA2) that acts in vivo as an anti-thrombotic agent. Inhibits platelet aggregation induced by ADP, arachidonic acid, and thrombin. PLA2 catalyzes the calcium-dependent hydrolysis of the 2-acyl groups in 3-sn-phosphoglycerides. The sequence is that of Acidic phospholipase A2 from Gloydius halys (Chinese water mocassin).